Here is a 172-residue protein sequence, read N- to C-terminus: NADH dehydrogenase [ubiquinone] 1 alpha subcomplex subunit 8 (172 aa).

2 CHCH domains span residues 33 to 74 (GAQC…FRQI) and 75 to 118 (KRHC…LGWV). 4 short sequence motifs (cx9C motif) span residues 36–46 (CDKPNKEFMLC), 56–66 (CLEEGKLVNKC), 78–88 (CAEPFTEYWTC), and 100–110 (CRKQQAKFDEC). 4 disulfides stabilise this stretch: Cys-36–Cys-66, Cys-46–Cys-56, Cys-78–Cys-110, and Cys-88–Cys-100. The disordered stretch occupies residues 133 to 164 (TDRPLPENPYHSRPRPDPSPEIEGDLQPATHG).

The protein belongs to the complex I NDUFA8 subunit family. As to quaternary structure, complex I is composed of 45 different subunits. In terms of processing, may contain intrachain disulfide bonds, as evidenced by its electrophoretic mobility under reducing vs non-reducing conditions.

It is found in the mitochondrion inner membrane. The protein resides in the mitochondrion intermembrane space. It localises to the mitochondrion. In terms of biological role, accessory subunit of the mitochondrial membrane respiratory chain NADH dehydrogenase (Complex I), that is believed not to be involved in catalysis. Complex I functions in the transfer of electrons from NADH to the respiratory chain. The immediate electron acceptor for the enzyme is believed to be ubiquinone. This chain is NADH dehydrogenase [ubiquinone] 1 alpha subcomplex subunit 8 (NDUFA8), found in Homo sapiens (Human).